A 410-amino-acid polypeptide reads, in one-letter code: Lissencephaly-1 homolog (410 aa).

Residues 7-39 form the LisH domain; the sequence is QQEELQLAVHAYLVEAGHAEAAAAMAKSANLGD. Positions 55–80 form a coiled coil; that stretch reads TTITRLQKRNMELQAEVEELRSSARA. WD repeat units follow at residues 104 to 143, 146 to 185, 188 to 227, 230 to 269, 294 to 333, 336 to 375, and 378 to 410; these read GHRLPITAVAIHPSFAVMASASEDASIKLWDMESGNFERS, GHTNAVNDIAYDREGNRLVSCSTDMTIKVWNMDNFTCTKT, GHDHTVSSVRFDHTGDRVFSASRDKTIKIWELATGYCLQT, GHSDWVRSIDVSADGAWICSASSDHTVRVWSVASGECKHV, MIFGSKPSAEAASKGPFVASASRDKSICLFDVSTGQHLAR, GHDNWVRATAWSRGGRYLFSVADDKTMRVWDIATKRVSKT, and AHNHFVSCIAVHAKNTHVVTGSVDLKVKVWECN.

The protein belongs to the WD repeat LIS1/nudF family.

Its subcellular location is the cytoplasm. It localises to the cytoskeleton. It is found in the microtubule organizing center. The protein localises to the centrosome. Functionally, positively regulates the activity of the minus-end directed microtubule motor protein dynein. May enhance dynein-mediated microtubule sliding by targeting dynein to the microtubule plus end. Required for several dynein- and microtubule-dependent processes. This is Lissencephaly-1 homolog from Monosiga brevicollis (Choanoflagellate).